A 941-amino-acid chain; its full sequence is Isoleucine--tRNA ligase (941 aa).

Positions 59-69 (PYANGNIHIGH) match the 'HIGH' region motif. Residue E562 participates in L-isoleucyl-5'-AMP binding. A 'KMSKS' region motif is present at residues 603–607 (KMSKS). K606 provides a ligand contact to ATP. C904, C907, C924, and C927 together coordinate Zn(2+).

It belongs to the class-I aminoacyl-tRNA synthetase family. IleS type 1 subfamily. In terms of assembly, monomer. It depends on Zn(2+) as a cofactor.

It localises to the cytoplasm. The catalysed reaction is tRNA(Ile) + L-isoleucine + ATP = L-isoleucyl-tRNA(Ile) + AMP + diphosphate. In terms of biological role, catalyzes the attachment of isoleucine to tRNA(Ile). As IleRS can inadvertently accommodate and process structurally similar amino acids such as valine, to avoid such errors it has two additional distinct tRNA(Ile)-dependent editing activities. One activity is designated as 'pretransfer' editing and involves the hydrolysis of activated Val-AMP. The other activity is designated 'posttransfer' editing and involves deacylation of mischarged Val-tRNA(Ile). The chain is Isoleucine--tRNA ligase from Haemophilus influenzae (strain ATCC 51907 / DSM 11121 / KW20 / Rd).